Here is a 418-residue protein sequence, read N- to C-terminus: MTLPNKAALVGLAHTLSEQVKRYLVTADETKSPEDHKLCIEGERTPSSTEHAQAWEIVRTCDRIGSLVHGPVPWLLSNALSHLDSACLAAATQLNLQDIIVDGPSPTSLDTIVTATGVSEDLLRRILRGCAQRFIFEEVAPDQYAHTDASKMLRVTGIHALVGFSCDEVMRSAAYFSNFLQQTKGKPPSWNVPSPFSLAFDPTKGLFDYYSTVDEVRGRRFDLGMGGTEATKPLVEEMFDFSSLPEGSTVVDVGGGRGHLSRRVSQKHPHLRFIVQDLPAVIHGVEDTDKVTMMEHDIRRRNPVRGADVYLLRSILHDYPDAACVEILSNIVTAMDPSKSRILLDEMIMPDLLAQDSQRFMNQIDMTVVLTLNGKERSTKEWNSLITMVDNRLETEKIWWRKGEEGSHWGVQQLRLRK.

The propeptide occupies 1-41 (MTLPNKAALVGLAHTLSEQVKRYLVTADETKSPEDHKLCIE). 170–176 (MRSAAYF) provides a ligand contact to substrate. The interval 206–225 (LFDYYSTVDEVRGRRFDLGM) is substrate binding. S-adenosyl-L-methionine-binding positions include 254–255 (GG), D277, 297–298 (DI), and R313. H317 functions as the Proton acceptor in the catalytic mechanism.

The protein belongs to the class I-like SAM-binding methyltransferase superfamily. Cation-independent O-methyltransferase family. COMT subfamily.

It catalyses the reaction sterigmatocystin + S-adenosyl-L-methionine = 8-O-methylsterigmatocystin + S-adenosyl-L-homocysteine + H(+). The enzyme catalyses dihydrosterigmatocystin + S-adenosyl-L-methionine = 8-O-methyldihydrosterigmatocystin + S-adenosyl-L-homocysteine + H(+). It participates in mycotoxin biosynthesis; aflatoxin biosynthesis. Functionally, involved in the conversion of sterigmatocystin to O-methylsterigmatocystin (OMST) and dihydrosterigmatocystin to dihydro-o-methylsterigmatocystin in the aflatoxin biosynthesis pathway. This chain is Sterigmatocystin 8-O-methyltransferase (omtA), found in Aspergillus flavus (strain ATCC 200026 / FGSC A1120 / IAM 13836 / NRRL 3357 / JCM 12722 / SRRC 167).